The chain runs to 307 residues: N-acetylglucosamine-1-phosphotransferase subunit gamma (307 aa).

An N-terminal signal peptide occupies residues 1 to 24; that stretch reads MAGRLAGFLMLLGLASQGPAPAYA. Positions 69–171 constitute an MRH domain; the sequence is GKCFSLVEST…TFETPLVCHP (103 aa). Cys-71 and Cys-84 are disulfide-bonded. Asn-88 and Asn-115 each carry an N-linked (GlcNAc...) asparagine glycan. 2 disulfide bridges follow: Cys-129/Cys-157 and Cys-142/Cys-169. Residues 176-279 form the DMAP1-binding domain; that stretch reads VYPTLSEALQ…HTQPTETTHS (104 aa).

As to quaternary structure, homodimer; disulfide-linked. Hexamer of two alpha (GNPTAB), two beta (GNPTAB) and two gamma (GNPTG) subunits; disulfide-linked. The alpha and/or the beta subunits of the enzyme constitute the catalytic subunits. Cys-245 mediates the formation of the interchain disulfide bond for formation of the homodimer. Cys-142, Cys-157 and Cys-169 are involved in intramolecular disulfide bonds formation. As to expression, widely expressed. Highly expressed in the liver, intestine, brain, thymus, testis and ovary.

The protein localises to the secreted. Its subcellular location is the golgi apparatus. Functionally, non-catalytic subunit of the N-acetylglucosamine-1-phosphotransferase complex, an enzyme that catalyzes the formation of mannose 6-phosphate (M6P) markers on high mannose type oligosaccharides in the Golgi apparatus. Binds and presents the high mannose glycans of the acceptor to the catalytic alpha and beta subunits (GNPTAB). Enhances the rate of N-acetylglucosamine-1-phosphate transfer to the oligosaccharides of acid hydrolase acceptors. The polypeptide is N-acetylglucosamine-1-phosphotransferase subunit gamma (Gnptg) (Mus musculus (Mouse)).